Reading from the N-terminus, the 161-residue chain is 18.1 kDa class I heat shock protein (161 aa).

The 116-residue stretch at 45-160 (DVAAFTNARV…QVKSIDISGA (116 aa)) folds into the sHSP domain.

Belongs to the small heat shock protein (HSP20) family. In terms of assembly, may form oligomeric structures. Binds to AKR2A.

Its subcellular location is the cytoplasm. In Arabidopsis thaliana (Mouse-ear cress), this protein is 18.1 kDa class I heat shock protein (HSP18.1).